We begin with the raw amino-acid sequence, 472 residues long: Trigger factor (472 aa).

The PPIase FKBP-type domain maps to 174–261 (GDIALVSFKG…LEDLKIKELP (88 aa)). A disordered region spans residues 433 to 472 (NNTVVEKPPEKARDQIKEKSSKKKTTKTNKEKKSSKTPKS). Residues 439 to 451 (KPPEKARDQIKEK) show a composition bias toward basic and acidic residues.

This sequence belongs to the FKBP-type PPIase family. Tig subfamily.

The protein localises to the cytoplasm. It catalyses the reaction [protein]-peptidylproline (omega=180) = [protein]-peptidylproline (omega=0). In terms of biological role, involved in protein export. Acts as a chaperone by maintaining the newly synthesized protein in an open conformation. Functions as a peptidyl-prolyl cis-trans isomerase. The chain is Trigger factor from Prochlorococcus marinus (strain NATL1A).